Reading from the N-terminus, the 1687-residue chain is MRRPPPLGPTTASGPEGNVRNLRKRQAPGPGAAGGCGPEAGGRGENRQKRRMVARATPGRGEVKSDKSVAASGAGKAARRRVEGRRGQVSPSDRRGLEAAKEAEFPLQTERHTKEKRKVTEASSDDPQPGFDLVRKESLTSSESFQTVECLRSLGKEGIVEGIKRRIRNKKLKSLENPPLKITENEATQNIKVEFQDELYKNTLKYSCNILSPEVENNFVFKLRDCNCFPHSKDCNDENNLPYEPDGGCMHVAENFSKKENFRSLAEKSDTNNIPQLLQTEENVMGVNKLLPEESDLYQSKINGLLPCLQREKNKYSIEESSVGRKPRKRMKLSEKADETVTQMNFSNEYNKSELMLQENQMIADGKEAEAKSPLNVLRKVSHNTVSLMDHLLSVPEMVEKETSSEHHVNAVFQKTIEPLLKEETENASEPLGYENMALKEDFKSKSCIGKSPEYHIERRSSREDLRSDSEELKLSCQRTIPMTGKRTWPYYSCARISAWCWKKASLPESSYFLPGSQKSCKKVDVPKHQTNKTHLTDSKLLLQSSLTETNTESSSKEKLDSNLNCLFSVSAVEHTLMVIKEPIIKDDKKIKSEELSRSGSEVISNTTEDTQLTSDTQSLTGNKKRDRGNLTKLNLTAASKDGQEANNSTGKTIHRKACVAKQTFVVPDLVKILNTGRLTNFKIPLLKNKTKKRKEVNAKSSEREGYSPLELLDNLSGADTRQNRSKENVSMTMLGPQTLSIQNSVTPVQASSDSFYNKNSCSISPSFTKHGNSSKPSNHFSEPGNIVSNKEVASLTVENNAFSCDPGYVEKSPSFCCNKQETFRPVSSEVRGRKITKNFSEVGFPDILKAYEDDVLLIDVIQDDPDLFGVSNEGELSFTSEVPRISQEPNVPGEHQSTDSKYVETPVKKEPSDDLRELPVLDCGPIKPDICASNSAASEIKHDPKDANTSLGEVANETSENETLGDFSEQIKGSDLDEKHRFTDKVITKEEKENIYEVRKSKDSRNADIMVGECQFAAPVPKPLCLLVPPLNLSGHQEDTILNTWMNDFRFLGKHSVLKLQNPETCEIFKREKNVGVFQKSLGLMIPYKYCKFHFNTLRGCERPLCKFAHVPEQGDEKVCMDVFKKYININELCLLQRAVNVFMEYYRKFPPGIYFDLQVLNDLLNSLLKHCLLKEVFQIVNLSIMVKMLPSLKILLNIFEHVATMKLRNAVPALIDIFCKLVEAGMVLDPEHFNYIVKLLYQVQASKQEITAVLEMKSRLQMRQFKKNWKCDLDSALNKLEHCKEKGDWTKLGKLYINVKMGCEKFADFQTFCACIAETLTKNCEDERPDTPFCEFAETVSKDPQNSKVDKGVLGRIGISAMYFYHKLLQWSKGRKVLDKLYELKIHFASLKGLIGPEKLASRCQIVNVAAEIFLKSGSLDGALWVMRESEWIIDTPLWPCDRLDVLNRHNLLCTIAHETLAKSLYRQTFEVLQNLPGFQNSQETVEVSQYSLLFNKLLGSCIESNSLGMSSSVAEFMISKSIPIDFSFLRRLITSLGRSRLWLKARAHYKSALSLGCYPPLEGNLYRKLLLIPSYLSEIEMLLAIEIFMVSNASSIQSPGTSTQILQIVLKRCEDNQSRSNDDYQAAVERLIMAARISDPKLFVKHMTVNVNKEQVYSLEHCSALKWLKENMKWAGKVWLFSNH.

Disordered regions lie at residues 1–131 (MRRP…QPGF), 319–339 (EESS…KADE), 596–632 (LSRS…GNLT), and 880–916 (TSEV…SDDL). The span at 31-41 (GAAGGCGPEAG) shows a compositional bias: gly residues. The span at 80–113 (RRVEGRRGQVSPSDRRGLEAAKEAEFPLQTERHT) shows a compositional bias: basic and acidic residues. Residues 598–622 (RSGSEVISNTTEDTQLTSDTQSLTG) are compositionally biased toward polar residues. The segment covering 897 to 916 (QSTDSKYVETPVKKEPSDDL) has biased composition (basic and acidic residues).

It localises to the cytoplasm. The protein resides in the cytosol. Important for normal spermatogenesis and male fertility. Specifically required for progression to the post-meiotic stages of spermatocyte development. Seems to be necessary for normal expression levels of a number of testis-expressed gene transcripts, although its role in this process is unclear. This Macaca fascicularis (Crab-eating macaque) protein is Protein TOPAZ1 (TOPAZ1).